The chain runs to 466 residues: Cysteine--tRNA ligase (466 aa).

Position 28 (Cys-28) interacts with Zn(2+). Residues 30–40 (PTVYNYIHIGN) carry the 'HIGH' region motif. Cys-208, His-233, and Glu-237 together coordinate Zn(2+). A 'KMSKS' region motif is present at residues 265–269 (KMSKS). Lys-268 provides a ligand contact to ATP.

The protein belongs to the class-I aminoacyl-tRNA synthetase family. Monomer. Zn(2+) is required as a cofactor.

The protein resides in the cytoplasm. The enzyme catalyses tRNA(Cys) + L-cysteine + ATP = L-cysteinyl-tRNA(Cys) + AMP + diphosphate. In Staphylococcus aureus (strain MSSA476), this protein is Cysteine--tRNA ligase.